Here is a 449-residue protein sequence, read N- to C-terminus: Asparagine--tRNA ligase (449 aa).

Belongs to the class-II aminoacyl-tRNA synthetase family. Homodimer.

It is found in the cytoplasm. The catalysed reaction is tRNA(Asn) + L-asparagine + ATP = L-asparaginyl-tRNA(Asn) + AMP + diphosphate + H(+). The chain is Asparagine--tRNA ligase from Mesomycoplasma hyopneumoniae (strain J / ATCC 25934 / NCTC 10110) (Mycoplasma hyopneumoniae).